The sequence spans 689 residues: ATP-dependent zinc metalloprotease FtsH 2 (689 aa).

Over Met-1 to Lys-3 the chain is Cytoplasmic. A helical membrane pass occupies residues Phe-4–Asn-24. Topologically, residues Phe-25–Trp-111 are extracellular. The helical transmembrane segment at Phe-112–Phe-132 threads the bilayer. Over Met-133 to Glu-689 the chain is Cytoplasmic. Gly-205–Thr-212 serves as a coordination point for ATP. Residue His-427 participates in Zn(2+) binding. Glu-428 is a catalytic residue. The Zn(2+) site is built by His-431 and Asp-503. Residues Glu-661–Glu-673 show a composition bias toward basic and acidic residues. The disordered stretch occupies residues Glu-661–Glu-689.

It in the central section; belongs to the AAA ATPase family. In the C-terminal section; belongs to the peptidase M41 family. Homohexamer. The cofactor is Zn(2+).

The protein resides in the cell membrane. In terms of biological role, acts as a processive, ATP-dependent zinc metallopeptidase for both cytoplasmic and membrane proteins. Plays a role in the quality control of integral membrane proteins. The chain is ATP-dependent zinc metalloprotease FtsH 2 from Alkaliphilus metalliredigens (strain QYMF).